Here is a 257-residue protein sequence, read N- to C-terminus: Meiotically up-regulated gene 14 protein (257 aa).

It is found in the cytoplasm. Its subcellular location is the nucleus. In terms of biological role, has a role in meiosis. This Schizosaccharomyces pombe (strain 972 / ATCC 24843) (Fission yeast) protein is Meiotically up-regulated gene 14 protein (mug14).